The sequence spans 91 residues: Teretoxin Tan22.13 (91 aa).

An N-terminal signal peptide occupies residues 1 to 21 (MKVQILFALMMVLVTLCLGQK). The propeptide occupies 22-24 (MQR).

This sequence belongs to the teretoxin C (TC) superfamily. In terms of processing, contains 4 disulfide bonds. Expressed by the venom duct.

Its subcellular location is the secreted. The chain is Teretoxin Tan22.13 from Terebra anilis (Auger snail).